The primary structure comprises 221 residues: Aspartic protease inhibitor 1 (221 aa).

The first 23 residues, 1-23 (MMKCLFFLCLCLFPILVFSSTFT), serve as a signal peptide directing secretion. Positions 24-32 (SQNPINLPS) are excised as a propeptide. Positions 26-31 (NPINLP) match the Vacuolar targeting signal motif. A glycan (N-linked (GlcNAc...) asparagine) is linked at asparagine 51. 2 disulfide bridges follow: cysteine 80–cysteine 125 and cysteine 174–cysteine 186.

The protein belongs to the protease inhibitor I3 (leguminous Kunitz-type inhibitor) family. In terms of tissue distribution, tubers, young leaves and flower bud. Not detected in root, stem or mature leaves.

It localises to the vacuole. In terms of biological role, inhibitor of cathepsin D (aspartic protease). May also inhibit trypsin and chymotrypsin (serine proteases). Protects the plant by inhibiting proteases of invading organisms. The polypeptide is Aspartic protease inhibitor 1 (Solanum tuberosum (Potato)).